We begin with the raw amino-acid sequence, 1645 residues long: Histone-lysine N-methyltransferase set-26 (1645 aa).

Disordered regions lie at residues 1-82 (MADG…QQIP), 109-132 (EPAA…RPTE), 200-228 (DAVG…SVAP), 417-606 (TPEQ…VLRP), and 651-789 (TGQS…DEAA). Low complexity-rich tracts occupy residues 16-31 (EQPP…AEPI) and 67-82 (QEFY…QQIP). Residues 207 to 228 (PGTQYRRNQQTGGGLPSTSVAP) show a composition bias toward polar residues. 2 stretches are compositionally biased toward low complexity: residues 429–443 (RQRA…AAQR) and 453–467 (RPGA…PSMA). Residues 559–578 (MTQEEKNAHFARLTTDKEKP) are compositionally biased toward basic and acidic residues. Over residues 592 to 603 (PHVPPPPPPPLV) the composition is skewed to pro residues. Residues 651–675 (TGQSGSSAAARQRTVSGSAARAQTY) are compositionally biased toward polar residues. 2 stretches are compositionally biased toward basic residues: residues 684 to 699 (QHHH…RHSS) and 731 to 741 (HRPRGRPKGTR). Positions 780 to 789 (SESEGIDEAA) are enriched in acidic residues. A PHD-type zinc finger spans residues 794–842 (TMRCHCGMDHGDGDTIECEGCKTWQHMACMGLTLKSNTSKYKCEMCLPR). A disordered region spans residues 865–904 (AAKKQKRKSEPVEQKQKSQPSTSRKSAPMALQQQPAEPRV). Residues 881–899 (KSQPSTSRKSAPMALQQQP) show a composition bias toward polar residues. The SET domain occupies 973-1064 (MSNEVKRQPG…RNTEVTLPFD (92 aa)). Over residues 1099 to 1172 (RHRAMDHKKR…EAKERKKMEV (74 aa)) the composition is skewed to basic and acidic residues. Disordered regions lie at residues 1099 to 1333 (RHRA…SKNV), 1371 to 1536 (SGLL…STEG), and 1548 to 1645 (PLDD…TRWN). A coiled-coil region spans residues 1103–1217 (MDHKKREAEE…GKRKEARRRS (115 aa)). The span at 1173–1183 (EASAAAAPESS) shows a compositional bias: low complexity. The segment covering 1188-1210 (AREERRIQQAEEMFRRQEEEGKR) has biased composition (basic and acidic residues). Polar residues-rich tracts occupy residues 1258–1268 (TTQPSTSSFAT) and 1300–1311 (TVATPKDTTASN). Basic and acidic residues-rich tracts occupy residues 1382-1427 (SEVR…KKAN), 1434-1450 (KSEK…EKKP), and 1468-1485 (KKTE…ESSS). Residues 1554 to 1565 (SSSNTAPTTTIA) show a composition bias toward polar residues.

The protein belongs to the class V-like SAM-binding methyltransferase superfamily. As to expression, expressed both in the germline and in somatic tissues.

The protein resides in the nucleus. It carries out the reaction L-lysyl(9)-[histone H3] + 3 S-adenosyl-L-methionine = N(6),N(6),N(6)-trimethyl-L-lysyl(9)-[histone H3] + 3 S-adenosyl-L-homocysteine + 3 H(+). Its function is as follows. Histone methyltransferase that mediates trimethylation of 'Lys-9' of histone H3 in vitro. Involved in transcriptional regulation. Plays a role in the negative regulation of lifespan and in heat resistance. Together with set-9, negatively regulates lifespan in a germline-independent, partially daf-16-dependent fashion. Together with set-9, plays a role in germline development and maintenance and might play a role in the restriction of the trimethylation mark on histone H3 'Lys-4'(H3K4me3) to target genes specifically in the germline. Together with spr-5, required for transgenerational fertility. The sequence is that of Histone-lysine N-methyltransferase set-26 from Caenorhabditis elegans.